The following is a 94-amino-acid chain: Large ribosomal subunit protein uL23 (94 aa).

It belongs to the universal ribosomal protein uL23 family. As to quaternary structure, part of the 50S ribosomal subunit. Contacts protein L29, and trigger factor when it is bound to the ribosome.

Functionally, one of the early assembly proteins it binds 23S rRNA. One of the proteins that surrounds the polypeptide exit tunnel on the outside of the ribosome. Forms the main docking site for trigger factor binding to the ribosome. This chain is Large ribosomal subunit protein uL23, found in Geobacter sp. (strain M21).